A 41-amino-acid polypeptide reads, in one-letter code: Large ribosomal subunit protein bL36 (41 aa).

It belongs to the bacterial ribosomal protein bL36 family.

This Caulobacter vibrioides (strain ATCC 19089 / CIP 103742 / CB 15) (Caulobacter crescentus) protein is Large ribosomal subunit protein bL36.